The chain runs to 425 residues: Tryptophan synthase beta chain (425 aa).

Lysine 107 is subject to N6-(pyridoxal phosphate)lysine.

This sequence belongs to the TrpB family. As to quaternary structure, tetramer of two alpha and two beta chains. It depends on pyridoxal 5'-phosphate as a cofactor.

The catalysed reaction is (1S,2R)-1-C-(indol-3-yl)glycerol 3-phosphate + L-serine = D-glyceraldehyde 3-phosphate + L-tryptophan + H2O. It participates in amino-acid biosynthesis; L-tryptophan biosynthesis; L-tryptophan from chorismate: step 5/5. The beta subunit is responsible for the synthesis of L-tryptophan from indole and L-serine. The chain is Tryptophan synthase beta chain from Synechococcus sp. (strain JA-2-3B'a(2-13)) (Cyanobacteria bacterium Yellowstone B-Prime).